Consider the following 469-residue polypeptide: Probable Xaa-Pro aminopeptidase PEPP (469 aa).

Mn(2+) contacts are provided by Asp264, Asp275, Glu398, and Glu438.

It belongs to the peptidase M24B family. Mn(2+) is required as a cofactor.

The enzyme catalyses Release of any N-terminal amino acid, including proline, that is linked to proline, even from a dipeptide or tripeptide.. In terms of biological role, catalyzes the removal of a penultimate prolyl residue from the N-termini of peptides. The protein is Probable Xaa-Pro aminopeptidase PEPP (PEPP) of Ajellomyces capsulatus (strain G186AR / H82 / ATCC MYA-2454 / RMSCC 2432) (Darling's disease fungus).